Reading from the N-terminus, the 603-residue chain is Proline--tRNA ligase (603 aa).

Belongs to the class-II aminoacyl-tRNA synthetase family. ProS type 1 subfamily. As to quaternary structure, homodimer.

It localises to the cytoplasm. It carries out the reaction tRNA(Pro) + L-proline + ATP = L-prolyl-tRNA(Pro) + AMP + diphosphate. Catalyzes the attachment of proline to tRNA(Pro) in a two-step reaction: proline is first activated by ATP to form Pro-AMP and then transferred to the acceptor end of tRNA(Pro). As ProRS can inadvertently accommodate and process non-cognate amino acids such as alanine and cysteine, to avoid such errors it has two additional distinct editing activities against alanine. One activity is designated as 'pretransfer' editing and involves the tRNA(Pro)-independent hydrolysis of activated Ala-AMP. The other activity is designated 'posttransfer' editing and involves deacylation of mischarged Ala-tRNA(Pro). The misacylated Cys-tRNA(Pro) is not edited by ProRS. The sequence is that of Proline--tRNA ligase from Synechocystis sp. (strain ATCC 27184 / PCC 6803 / Kazusa).